We begin with the raw amino-acid sequence, 298 residues long: Thymidylate synthase (298 aa).

Residues arginine 25 and 159 to 160 (RR) each bind dUMP. The active-site Nucleophile is cysteine 179. Residues 200–203 (RSVD), asparagine 211, and 241–243 (HLY) contribute to the dUMP site. Position 203 (aspartate 203) interacts with (6R)-5,10-methylene-5,6,7,8-tetrahydrofolate. Alanine 297 contacts (6R)-5,10-methylene-5,6,7,8-tetrahydrofolate.

Belongs to the thymidylate synthase family. Bacterial-type ThyA subfamily. Homodimer.

Its subcellular location is the cytoplasm. The enzyme catalyses dUMP + (6R)-5,10-methylene-5,6,7,8-tetrahydrofolate = 7,8-dihydrofolate + dTMP. It participates in pyrimidine metabolism; dTTP biosynthesis. Its function is as follows. Catalyzes the reductive methylation of 2'-deoxyuridine-5'-monophosphate (dUMP) to 2'-deoxythymidine-5'-monophosphate (dTMP) while utilizing 5,10-methylenetetrahydrofolate (mTHF) as the methyl donor and reductant in the reaction, yielding dihydrofolate (DHF) as a by-product. This enzymatic reaction provides an intracellular de novo source of dTMP, an essential precursor for DNA biosynthesis. The sequence is that of Thymidylate synthase from Cereibacter sphaeroides (strain ATCC 17023 / DSM 158 / JCM 6121 / CCUG 31486 / LMG 2827 / NBRC 12203 / NCIMB 8253 / ATH 2.4.1.) (Rhodobacter sphaeroides).